Reading from the N-terminus, the 161-residue chain is uncharacterized protein (161 aa).

Belongs to the SixA phosphatase family.

This is an uncharacterized protein from Mycobacterium leprae (strain TN).